Here is a 392-residue protein sequence, read N- to C-terminus: Formate-dependent phosphoribosylglycinamide formyltransferase (392 aa).

N(1)-(5-phospho-beta-D-ribosyl)glycinamide is bound by residues 22–23 and E82; that span reads EL. Residues R114, K155, 160–165, 195–198, and E203 each bind ATP; these read SSGKGQ and EGVV. Residues 119 to 308 enclose the ATP-grasp domain; sequence RLAAEELGLP…EFALHVRAFL (190 aa). Residues E267 and E279 each coordinate Mg(2+). N(1)-(5-phospho-beta-D-ribosyl)glycinamide-binding positions include D286, K355, and 362–363; that span reads RR.

It belongs to the PurK/PurT family. Homodimer.

The catalysed reaction is N(1)-(5-phospho-beta-D-ribosyl)glycinamide + formate + ATP = N(2)-formyl-N(1)-(5-phospho-beta-D-ribosyl)glycinamide + ADP + phosphate + H(+). It functions in the pathway purine metabolism; IMP biosynthesis via de novo pathway; N(2)-formyl-N(1)-(5-phospho-D-ribosyl)glycinamide from N(1)-(5-phospho-D-ribosyl)glycinamide (formate route): step 1/1. In terms of biological role, involved in the de novo purine biosynthesis. Catalyzes the transfer of formate to 5-phospho-ribosyl-glycinamide (GAR), producing 5-phospho-ribosyl-N-formylglycinamide (FGAR). Formate is provided by PurU via hydrolysis of 10-formyl-tetrahydrofolate. The polypeptide is Formate-dependent phosphoribosylglycinamide formyltransferase (Cronobacter sakazakii (strain ATCC BAA-894) (Enterobacter sakazakii)).